A 363-amino-acid polypeptide reads, in one-letter code: 3-methyl-D-ornithine--L-lysine ligase (363 aa).

Residue Lys10 coordinates ATP. 11–12 is an L-lysine binding site; it reads LQ. ATP-binding positions include Asp31, 49–50, and 72–73; these read DV and EN. An L-lysine-binding site is contributed by Glu72. Residues Lys104, Lys131, Ser138, and 160–163 contribute to the ADP site; that span reads EEYV. Residues 169–171 and Asp225 contribute to the D-ornithine site; that span reads SLE. Residues Glu227, Glu239, and Asp241 each coordinate Mg(2+). An ADP-binding site is contributed by Glu239. D-ornithine-binding positions include 243-248 and Glu302; that span reads RFPSQT. The L-lysine site is built by Ser246 and Glu302.

This sequence belongs to the PylC family. Requires Mg(2+) as cofactor.

It carries out the reaction (3R)-3-methyl-D-ornithine + L-lysine + ATP = (3R)-3-methyl-D-ornithyl-N(6)-L-lysine + ADP + phosphate + H(+). It functions in the pathway amino-acid biosynthesis; L-pyrrolysine biosynthesis. Its function is as follows. Is required for the biosynthesis of pyrrolysine. Catalyzes the ATP-dependent ligation between (3R)-3-methyl-D-ornithine and L-lysine, leading to (3R)-3-methyl-D-ornithyl-N6-L-lysine. The sequence is that of 3-methyl-D-ornithine--L-lysine ligase from Methanosarcina barkeri (strain Fusaro / DSM 804).